The sequence spans 216 residues: Minor fimbrial subunit HifD (216 aa).

The first 19 residues, 1-19 (MQKTPKKLTALCHQQSTAS), serve as a signal peptide directing secretion. C20 carries N-palmitoyl cysteine lipidation. C20 is lipidated: S-diacylglycerol cysteine. Residues 159–180 (PINVDGSQANSEKAPDTGKEQN) form a disordered region.

It belongs to the fimbrial protein family.

The protein localises to the cell membrane. It localises to the fimbrium. Its function is as follows. May be a minor structural protein required for pilus biogenesis. The sequence is that of Minor fimbrial subunit HifD (hifD) from Haemophilus influenzae.